The sequence spans 402 residues: Na(+)/H(+) antiporter NhaA 2 (402 aa).

The next 11 membrane-spanning stretches (helical) occupy residues 18-38 (AGGI…NTAL), 63-83 (ALLW…GLEV), 99-119 (SLPL…FYGI), 129-149 (GWAI…ALLG), 158-178 (ALLL…IAIF), 182-202 (GVEL…SAFG), 210-230 (IPYI…GVHA), 258-278 (ALHS…NAGV), 296-316 (IALG…WLAV), 329-349 (WLQV…SLFI), and 365-385 (IGVL…LVLG).

This sequence belongs to the NhaA Na(+)/H(+) (TC 2.A.33) antiporter family.

The protein resides in the cell inner membrane. The catalysed reaction is Na(+)(in) + 2 H(+)(out) = Na(+)(out) + 2 H(+)(in). In terms of biological role, na(+)/H(+) antiporter that extrudes sodium in exchange for external protons. The protein is Na(+)/H(+) antiporter NhaA 2 of Erythrobacter litoralis (strain HTCC2594).